A 544-amino-acid polypeptide reads, in one-letter code: Chaperonin GroEL 1 (544 aa).

Residues Thr29–Pro32, Asp86–Thr90, Gly413, and Asp495 each bind ATP. Residues Pro525–Tyr544 form a disordered region. Residues Lys528–Gly538 show a composition bias toward polar residues.

This sequence belongs to the chaperonin (HSP60) family. As to quaternary structure, forms a cylinder of 14 subunits composed of two heptameric rings stacked back-to-back. Interacts with the co-chaperonin GroES.

It is found in the cytoplasm. It carries out the reaction ATP + H2O + a folded polypeptide = ADP + phosphate + an unfolded polypeptide.. Functionally, together with its co-chaperonin GroES, plays an essential role in assisting protein folding. The GroEL-GroES system forms a nano-cage that allows encapsulation of the non-native substrate proteins and provides a physical environment optimized to promote and accelerate protein folding. This chain is Chaperonin GroEL 1, found in Synechococcus sp. (strain JA-2-3B'a(2-13)) (Cyanobacteria bacterium Yellowstone B-Prime).